Consider the following 325-residue polypeptide: Ribose-phosphate pyrophosphokinase (325 aa).

Residues 45-47 (NGE) and 104-105 (RQ) each bind ATP. The Mg(2+) site is built by histidine 138 and aspartate 178. The active site involves lysine 202. Residues arginine 204, aspartate 230, and 234–238 (DTGGT) contribute to the D-ribose 5-phosphate site.

It belongs to the ribose-phosphate pyrophosphokinase family. Class I subfamily. Homohexamer. The cofactor is Mg(2+).

The protein resides in the cytoplasm. The catalysed reaction is D-ribose 5-phosphate + ATP = 5-phospho-alpha-D-ribose 1-diphosphate + AMP + H(+). The protein operates within metabolic intermediate biosynthesis; 5-phospho-alpha-D-ribose 1-diphosphate biosynthesis; 5-phospho-alpha-D-ribose 1-diphosphate from D-ribose 5-phosphate (route I): step 1/1. Its function is as follows. Involved in the biosynthesis of the central metabolite phospho-alpha-D-ribosyl-1-pyrophosphate (PRPP) via the transfer of pyrophosphoryl group from ATP to 1-hydroxyl of ribose-5-phosphate (Rib-5-P). The chain is Ribose-phosphate pyrophosphokinase from Corynebacterium efficiens (strain DSM 44549 / YS-314 / AJ 12310 / JCM 11189 / NBRC 100395).